A 322-amino-acid polypeptide reads, in one-letter code: Pre-mRNA-splicing factor NTR2 (322 aa).

Residues 1–30 (MAIKKRNKIRLPSGSPEEVGIDGSAHKPMQ) are disordered. Ser40 is subject to Phosphoserine. A disordered region spans residues 113-137 (LLSDSSEAGSSSEGEHISSIPTRGE). Residues 115–132 (SDSSEAGSSSEGEHISSI) are compositionally biased toward low complexity. Phosphoserine is present on residues Ser153 and Ser197.

As to quaternary structure, component of the NTR complex (NTC-related complex), composed of NTR1, NTR2 and PRP43. Interacts with CLF1, NTR1 and PRP43.

It is found in the cytoplasm. Its subcellular location is the nucleus. Its function is as follows. Involved in pre-mRNA splicing and spliceosome disassembly. Promotes release of excised lariat intron from the spliceosome by acting as a receptor for PRP43. This targeting of PRP43 leads to disassembly of the spliceosome with the separation of the U2, U5, U6 snRNPs and the NTC complex. The polypeptide is Pre-mRNA-splicing factor NTR2 (NTR2) (Saccharomyces cerevisiae (strain ATCC 204508 / S288c) (Baker's yeast)).